The following is a 524-amino-acid chain: 2-isopropylmalate synthase (524 aa).

The region spanning 15–277 is the Pyruvate carboxyltransferase domain; that stretch reads VVIFDTTMRD…ETKIDTTHIT (263 aa). 4 residues coordinate Mn(2+): D24, H212, H214, and N248. The tract at residues 401–524 is regulatory domain; it reads RVQRLRVVAG…RPEAAIASGF (124 aa).

It belongs to the alpha-IPM synthase/homocitrate synthase family. LeuA type 1 subfamily. Homodimer. Requires Mn(2+) as cofactor.

Its subcellular location is the cytoplasm. It carries out the reaction 3-methyl-2-oxobutanoate + acetyl-CoA + H2O = (2S)-2-isopropylmalate + CoA + H(+). It functions in the pathway amino-acid biosynthesis; L-leucine biosynthesis; L-leucine from 3-methyl-2-oxobutanoate: step 1/4. Functionally, catalyzes the condensation of the acetyl group of acetyl-CoA with 3-methyl-2-oxobutanoate (2-ketoisovalerate) to form 3-carboxy-3-hydroxy-4-methylpentanoate (2-isopropylmalate). In Caulobacter sp. (strain K31), this protein is 2-isopropylmalate synthase.